Reading from the N-terminus, the 164-residue chain is UBA-like domain-containing protein 2 (164 aa).

S2 carries the post-translational modification N-acetylserine. Positions 144-164 (PPGASQGGAPQKAMAAMDGQR) are disordered.

This sequence belongs to the UBALD family.

This Mus musculus (Mouse) protein is UBA-like domain-containing protein 2 (Ubald2).